A 423-amino-acid polypeptide reads, in one-letter code: Core protease OPG082 (423 aa).

Catalysis depends on residues histidine 241, aspartate 248, and cysteine 328.

Belongs to the peptidase C57 family.

Its subcellular location is the virion. Functionally, late protein responsible for processing most or all of the viral core and membrane proteins known to undergo morphogenesis-associated proteolysis. These proteolytic events are involved in the transformation of immature virions (IV) into mature virions (MV). Probably cleaves at least the OPG129, OPG136, OPG098, and OPG144 precursors preferentially at Ala-Gly-|-Ala motifs. Also seems to process Ala-Gly-|-Ser and Ala-Gly-|-Thr motifs. The chain is Core protease OPG082 (OPG083) from Homo sapiens (Human).